Here is a 475-residue protein sequence, read N- to C-terminus: AAA-ATPase At1g43910 (475 aa).

Residues 11 to 28 (VSAVFSLYTSFSAITMLF) form a helical membrane-spanning segment. The residue at position 85 (Thr-85) is a Phosphothreonine. 246-253 (GPPGTGKS) is a binding site for ATP. 2 disordered regions span residues 306 to 328 (SRRR…PQKR) and 453 to 475 (KGED…EAET). Acidic residues predominate over residues 457–467 (SSVEEEGEIED).

It belongs to the AAA ATPase family. BCS1 subfamily. It depends on Mg(2+) as a cofactor. Expressed in developing shoots.

It is found in the membrane. The catalysed reaction is ATP + H2O = ADP + phosphate + H(+). This chain is AAA-ATPase At1g43910, found in Arabidopsis thaliana (Mouse-ear cress).